The sequence spans 357 residues: Dihydroorotate dehydrogenase (quinone) (357 aa).

FMN-binding positions include 66–70 and Thr90; that span reads AGFDK. A substrate-binding site is contributed by Lys70. 115-119 provides a ligand contact to substrate; the sequence is NRMGF. FMN is bound by residues Asn143 and Asn176. Asn176 is a binding site for substrate. Ser179 acts as the Nucleophile in catalysis. A substrate-binding site is contributed by Asn181. Residues Lys212 and Thr240 each contribute to the FMN site. 241-242 provides a ligand contact to substrate; it reads NT. Residues Gly264, Gly293, and 314 to 315 contribute to the FMN site; that span reads YT.

It belongs to the dihydroorotate dehydrogenase family. Type 2 subfamily. In terms of assembly, monomer. The cofactor is FMN.

Its subcellular location is the cell membrane. The enzyme catalyses (S)-dihydroorotate + a quinone = orotate + a quinol. The protein operates within pyrimidine metabolism; UMP biosynthesis via de novo pathway; orotate from (S)-dihydroorotate (quinone route): step 1/1. Functionally, catalyzes the conversion of dihydroorotate to orotate with quinone as electron acceptor. The chain is Dihydroorotate dehydrogenase (quinone) from Mycobacterium bovis (strain BCG / Pasteur 1173P2).